We begin with the raw amino-acid sequence, 419 residues long: Putative polyketide beta-ketoacyl synthase 2 (419 aa).

The Ketosynthase family 3 (KS3) domain occupies 10–413 (TRRTAVTGIG…GSNAALVLRP (404 aa)).

Belongs to the thiolase-like superfamily. Beta-ketoacyl-ACP synthases family.

The protein operates within antibiotic biosynthesis; curamycin biosynthesis. The chain is Putative polyketide beta-ketoacyl synthase 2 (curB) from Streptomyces cyaneus (Streptomyces curacoi).